A 544-amino-acid chain; its full sequence is Chaperonin GroEL (544 aa).

ATP is bound by residues 30 to 33, Lys-51, 87 to 91, Gly-415, 480 to 482, and Asp-496; these read TLGP, DGTTT, and DAA.

Belongs to the chaperonin (HSP60) family. Forms a cylinder of 14 subunits composed of two heptameric rings stacked back-to-back. Interacts with the co-chaperonin GroES.

Its subcellular location is the cytoplasm. It catalyses the reaction ATP + H2O + a folded polypeptide = ADP + phosphate + an unfolded polypeptide.. Together with its co-chaperonin GroES, plays an essential role in assisting protein folding. The GroEL-GroES system forms a nano-cage that allows encapsulation of the non-native substrate proteins and provides a physical environment optimized to promote and accelerate protein folding. This is Chaperonin GroEL from Sulfurihydrogenibium sp. (strain YO3AOP1).